A 561-amino-acid polypeptide reads, in one-letter code: Dihydroxy-acid dehydratase (561 aa).

Position 80 (Asp80) interacts with Mg(2+). Residue Cys121 participates in [2Fe-2S] cluster binding. The Mg(2+) site is built by Asp122 and Lys123. Lys123 is subject to N6-carboxylysine. Cys194 provides a ligand contact to [2Fe-2S] cluster. Glu448 lines the Mg(2+) pocket. Catalysis depends on Ser474, which acts as the Proton acceptor.

Belongs to the IlvD/Edd family. Homodimer. The cofactor is [2Fe-2S] cluster. It depends on Mg(2+) as a cofactor.

It carries out the reaction (2R)-2,3-dihydroxy-3-methylbutanoate = 3-methyl-2-oxobutanoate + H2O. The catalysed reaction is (2R,3R)-2,3-dihydroxy-3-methylpentanoate = (S)-3-methyl-2-oxopentanoate + H2O. Its pathway is amino-acid biosynthesis; L-isoleucine biosynthesis; L-isoleucine from 2-oxobutanoate: step 3/4. The protein operates within amino-acid biosynthesis; L-valine biosynthesis; L-valine from pyruvate: step 3/4. Functionally, functions in the biosynthesis of branched-chain amino acids. Catalyzes the dehydration of (2R,3R)-2,3-dihydroxy-3-methylpentanoate (2,3-dihydroxy-3-methylvalerate) into 2-oxo-3-methylpentanoate (2-oxo-3-methylvalerate) and of (2R)-2,3-dihydroxy-3-methylbutanoate (2,3-dihydroxyisovalerate) into 2-oxo-3-methylbutanoate (2-oxoisovalerate), the penultimate precursor to L-isoleucine and L-valine, respectively. The chain is Dihydroxy-acid dehydratase from Anaeromyxobacter sp. (strain Fw109-5).